We begin with the raw amino-acid sequence, 478 residues long: Cytochrome P450 monooxygenase asqL (478 aa).

Cys407 provides a ligand contact to heme.

This sequence belongs to the cytochrome P450 family. Requires heme as cofactor.

The protein operates within secondary metabolite biosynthesis. It functions in the pathway alkaloid biosynthesis. Its pathway is mycotoxin biosynthesis. Cytochrome P450 monooxygenase; part of the gene cluster that mediates the biosynthesis of the aspoquinolone mycotoxins. The role of asqL within the aspoquinolone pathway has still to be determined. The first step of the pathway is catalyzed by the nonribosomal peptide synthetase asqK that condenses anthranilic acid and O-methyl-L-tyrosine to produce 4'-methoxycyclopeptin. 4'-methoxycyclopeptin is then converted to 4'-methoxydehydrocyclopeptin by the ketoglutarate-dependent dioxygenase asqJ. AsqJ also converts its first product 4'-methoxydehydrocyclopeptin to 4'-methoxycyclopenin. The following conversion of 4'-methoxycyclopenin into 4'-methoxyviridicatin is catalyzed by the cyclopenase asqI. 4'-methoxyviridicatin is the precursor of quinolone natural products, and is further converted to quinolinone B. The prenyltransferase asqH1 then catalyzes the canonical Friedel-Crafts alkylation of quinolinone B with dimethylallyl cation to yield dimethylallyl quinolone, which is subjected to FAD-dependent dehydrogenation by the FAD-linked oxidoreductase asqF to yield conjugated aryl diene. The delta(3') double bond then serves as the site of the second alkylation with DMAPP catalyzed by the prenyltransferase asqH2 to yield a carbenium ion intermediate, which can be attacked by H(2)O to yield a styrenyl quinolone containing a C3'-hydroxyprenyl chain. The FAD-dependent monooxygenase asqG performs epoxidation of the terminal C7'-C8' olefin. Finally, after dehydratation of the epoxide at C3 by asqC, the quinolone epoxide rearrangement protein asqO catalyzes an enzymatic 3-exo-tet cyclization to yield the cyclopropyl-THF ring system in aspoquinolone. The protein is Cytochrome P450 monooxygenase asqL of Emericella nidulans (strain FGSC A4 / ATCC 38163 / CBS 112.46 / NRRL 194 / M139) (Aspergillus nidulans).